A 564-amino-acid polypeptide reads, in one-letter code: 2-succinyl-5-enolpyruvyl-6-hydroxy-3-cyclohexene-1-carboxylate synthase (564 aa).

It belongs to the TPP enzyme family. MenD subfamily. As to quaternary structure, homodimer. Requires Mg(2+) as cofactor. It depends on Mn(2+) as a cofactor. Thiamine diphosphate is required as a cofactor.

The enzyme catalyses isochorismate + 2-oxoglutarate + H(+) = 5-enolpyruvoyl-6-hydroxy-2-succinyl-cyclohex-3-ene-1-carboxylate + CO2. It functions in the pathway quinol/quinone metabolism; 1,4-dihydroxy-2-naphthoate biosynthesis; 1,4-dihydroxy-2-naphthoate from chorismate: step 2/7. It participates in quinol/quinone metabolism; menaquinone biosynthesis. In terms of biological role, catalyzes the thiamine diphosphate-dependent decarboxylation of 2-oxoglutarate and the subsequent addition of the resulting succinic semialdehyde-thiamine pyrophosphate anion to isochorismate to yield 2-succinyl-5-enolpyruvyl-6-hydroxy-3-cyclohexene-1-carboxylate (SEPHCHC). This Photorhabdus laumondii subsp. laumondii (strain DSM 15139 / CIP 105565 / TT01) (Photorhabdus luminescens subsp. laumondii) protein is 2-succinyl-5-enolpyruvyl-6-hydroxy-3-cyclohexene-1-carboxylate synthase.